We begin with the raw amino-acid sequence, 199 residues long: Recombination protein RecR (199 aa).

A C4-type zinc finger spans residues 58–73 (CSICNNITDVDPCTYC). Positions 81-176 (QVICVVEEPT…RVTRIATGVP (96 aa)) constitute a Toprim domain.

Belongs to the RecR family.

In terms of biological role, may play a role in DNA repair. It seems to be involved in an RecBC-independent recombinational process of DNA repair. It may act with RecF and RecO. This Koribacter versatilis (strain Ellin345) protein is Recombination protein RecR.